Reading from the N-terminus, the 277-residue chain is Myelin proteolipid protein (277 aa).

Residues Gly2–Cys10 lie on the Cytoplasmic side of the membrane. Residues Cys6, Cys7, and Cys10 are each lipidated (S-palmitoyl cysteine). Residues Leu11–Gly36 traverse the membrane as a helical segment. The Extracellular segment spans residues His37 to Glu59. The helical transmembrane segment at Phe60–Ala88 threads the bilayer. Over Glu89–Lys151 the chain is Cytoplasmic. S-palmitoyl cysteine attachment occurs at residues Cys109, Cys139, and Cys141. Residues Phe152–Phe178 form a helical membrane-spanning segment. At Asn179–His238 the chain is on the extracellular side. 2 disulfides stabilise this stretch: Cys184–Cys228 and Cys201–Cys220. Thr199 carries O-palmitoyl threonine lipidation. The chain crosses the membrane as a helical span at residues Leu239–Leu268. At Arg269 to Phe277 the chain is on the cytoplasmic side.

Belongs to the myelin proteolipid protein family.

Its subcellular location is the cell membrane. Its function is as follows. This is the major myelin protein from the central nervous system. It plays an important role in the formation or maintenance of the multilamellar structure of myelin. The polypeptide is Myelin proteolipid protein (PLP1) (Taeniopygia guttata (Zebra finch)).